A 126-amino-acid polypeptide reads, in one-letter code: uncharacterized protein (126 aa).

The HTH hxlR-type domain occupies 8–106; sequence ISVEATLEVI…WGANHINRVY (99 aa).

This is an uncharacterized protein from Bacillus subtilis (strain 168).